The primary structure comprises 197 residues: Large ribosomal subunit protein uL18 (197 aa).

It belongs to the universal ribosomal protein uL18 family. In terms of assembly, part of the 50S ribosomal subunit. Contacts the 5S and 23S rRNAs.

Functionally, this is one of the proteins that bind and probably mediate the attachment of the 5S RNA into the large ribosomal subunit, where it forms part of the central protuberance. The sequence is that of Large ribosomal subunit protein uL18 from Sulfolobus acidocaldarius (strain ATCC 33909 / DSM 639 / JCM 8929 / NBRC 15157 / NCIMB 11770).